We begin with the raw amino-acid sequence, 225 residues long: Glutathione S-transferase Mu 3 (225 aa).

Residues 5 to 92 (SSMVLGYWDI…YIARKHNMCG (88 aa)) enclose the GST N-terminal domain. Residues 11–12 (YW), 50–54 (WLDVK), and 63–64 (NL) contribute to the glutathione site. Lys-54 is covalently cross-linked (Glycyl lysine isopeptide (Lys-Gly) (interchain with G-Cter in SUMO2)). Lys-73 participates in a covalent cross-link: Glycyl lysine isopeptide (Lys-Gly) (interchain with G-Cter in SUMO2). 76 to 77 (QS) is a glutathione binding site. The GST C-terminal domain maps to 94 to 212 (TEEEKIRVDI…QSDQFFKMPI (119 aa)). Residue Tyr-120 participates in substrate binding.

It belongs to the GST superfamily. Mu family. Homodimer.

It localises to the cytoplasm. It catalyses the reaction RX + glutathione = an S-substituted glutathione + a halide anion + H(+). Functionally, conjugation of reduced glutathione to a wide number of exogenous and endogenous hydrophobic electrophiles. May govern uptake and detoxification of both endogenous compounds and xenobiotics at the testis and brain blood barriers. The polypeptide is Glutathione S-transferase Mu 3 (GSTM3) (Macaca fuscata fuscata (Japanese macaque)).